A 218-amino-acid chain; its full sequence is Glutathione S-transferase class-mu 26 kDa isozyme 51 (218 aa).

The GST N-terminal domain maps to 2–83 (PAKLGYWKIR…YIADKHGMLG (82 aa)). Residues 7 to 8 (YW), 41 to 45 (WFGDK), 54 to 55 (NL), and 67 to 68 (QS) each bind glutathione. The GST C-terminal domain occupies 85–203 (TPEERARISM…ESEKFIKWPL (119 aa)). Substrate is bound at residue Y111.

The protein belongs to the GST superfamily. Mu family. Homodimer.

It localises to the cytoplasm. The catalysed reaction is RX + glutathione = an S-substituted glutathione + a halide anion + H(+). Functionally, conjugation of reduced glutathione to a wide number of exogenous and endogenous hydrophobic electrophiles. Its function is as follows. GST isoenzymes appear to play a central role in the parasite detoxification system. Other functions are also suspected including a role in increasing the solubility of haematin in the parasite gut. This is Glutathione S-transferase class-mu 26 kDa isozyme 51 from Fasciola hepatica (Liver fluke).